Consider the following 210-residue polypeptide: Orotate phosphoribosyltransferase (210 aa).

Residues Arg-94, Lys-98, His-100, and 120–128 (EDLISTGGS) each bind 5-phospho-alpha-D-ribose 1-diphosphate. Orotate is bound at residue Ser-124.

This sequence belongs to the purine/pyrimidine phosphoribosyltransferase family. PyrE subfamily. In terms of assembly, homodimer. Mg(2+) serves as cofactor.

The catalysed reaction is orotidine 5'-phosphate + diphosphate = orotate + 5-phospho-alpha-D-ribose 1-diphosphate. It functions in the pathway pyrimidine metabolism; UMP biosynthesis via de novo pathway; UMP from orotate: step 1/2. Functionally, catalyzes the transfer of a ribosyl phosphate group from 5-phosphoribose 1-diphosphate to orotate, leading to the formation of orotidine monophosphate (OMP). In Bacillus anthracis (strain A0248), this protein is Orotate phosphoribosyltransferase.